The chain runs to 830 residues: MLAPDSLVLDGRFRVLRPLGSGGMGEVYLGEQVSLGRKVAIKVLHHDLHAQAGMAERFKREARLLSAVEHPAVVRIVDFGESGDHACLVMEFVEGESLYDVLTPGPMPPGRALPLLQQLAEGLAAIHDKGIIHRDLKPENVFISKSARGEQARLLDFGIARLVEPDAASSVSQIGVVLGTPEYLSPEQAVGAKVDTRSDLYSFGVLTYRVLSGRLPFDGPLPRNFLSQHASAAPLPLDRAAPTLSRYVGLLSLVMRLLEKDASKRPQSAHELADALAAAHSALSAFTPGLGTPAYVPQPGSGATPSSGTSVFGTGSASGSSSGPTGTAAFAGVAPAPQASSGTAAFGVASSSGSASGALPAASPHTGTASFGLKSSGGVAAVTGGNASVVKPQNLTVMLTDIQGFTERTSRQTHEENARMLETHDKLLMPLVKEHDGRLVQKRGDALLVVFRSPTAGVLCGMAMQDRLWRHNQTVPEVDRLNVRVCLHAGEVLATPDSVLGEPMEVIEAVEHVASAGEVTFTEAVNLARNRAEATAEPCGAITLPGRNEQLQLYRCQRAAEGPPFGDRFASQGSRGNALAPLLAKLQAVKLPTGLGELLRQRRREAALVAGAVVLLGAGAAWLSQRNDAGTRAFALLEDGKLNEALALMDAATDEEKELPSLRRARVAANHAKGHHISERTALSHLKEEELEDVEPLILDGLAEDYGKEPLTVLGNALARFPKDRLRAHYEDLAEEAYSLRQWGALRYLEFVKAADGVNLVRAYSEALNSPDCDIRTQAANRLAGLGDADAIPAMERVTSLPKAKGLLGSKDCGHEAAATAIKSLKQKSD.

Residues 1–605 (MLAPDSLVLD…GELLRQRRRE (605 aa)) are Cytoplasmic-facing. Positions 13 to 283 (FRVLRPLGSG…DALAAAHSAL (271 aa)) constitute a Protein kinase domain. Residues 19–27 (LGSGGMGEV) and Lys-42 contribute to the ATP site. Asp-135 functions as the Proton acceptor in the catalytic mechanism. Positions 296 to 326 (VPQPGSGATPSSGTSVFGTGSASGSSSGPTG) are disordered. Residues 299 to 326 (PGSGATPSSGTSVFGTGSASGSSSGPTG) show a composition bias toward low complexity. The Guanylate cyclase domain maps to 396–511 (TVMLTDIQGF…EPMEVIEAVE (116 aa)). Residues 606–623 (AALVAGAVVLLGAGAAWL) form a helical membrane-spanning segment. Topologically, residues 624 to 830 (SQRNDAGTRA…AIKSLKQKSD (207 aa)) are periplasmic.

Belongs to the protein kinase superfamily. Ser/Thr protein kinase family.

The protein resides in the cell membrane. The catalysed reaction is L-seryl-[protein] + ATP = O-phospho-L-seryl-[protein] + ADP + H(+). It catalyses the reaction L-threonyl-[protein] + ATP = O-phospho-L-threonyl-[protein] + ADP + H(+). In terms of biological role, regulates the activity of endogenous beta-lactamase or related enzymes, by blocking their secretion by phosphorylation, in response to an external signal yet to be identified. This chain is Serine/threonine-protein kinase pkn2 (pkn2), found in Myxococcus xanthus.